The primary structure comprises 423 residues: Sulfate adenylyltransferase (423 aa).

It belongs to the sulfate adenylyltransferase family.

It carries out the reaction sulfate + ATP + H(+) = adenosine 5'-phosphosulfate + diphosphate. It participates in sulfur metabolism; hydrogen sulfide biosynthesis; sulfite from sulfate: step 1/3. The sequence is that of Sulfate adenylyltransferase from Desulfovibrio desulfuricans (strain ATCC 27774 / DSM 6949 / MB).